The following is an 858-amino-acid chain: Alanine--tRNA ligase (858 aa).

Zn(2+)-binding residues include His550, His554, Cys652, and His656.

This sequence belongs to the class-II aminoacyl-tRNA synthetase family. Zn(2+) is required as a cofactor.

It localises to the cytoplasm. It carries out the reaction tRNA(Ala) + L-alanine + ATP = L-alanyl-tRNA(Ala) + AMP + diphosphate. Catalyzes the attachment of alanine to tRNA(Ala) in a two-step reaction: alanine is first activated by ATP to form Ala-AMP and then transferred to the acceptor end of tRNA(Ala). Also edits incorrectly charged Ser-tRNA(Ala) and Gly-tRNA(Ala) via its editing domain. The protein is Alanine--tRNA ligase of Pseudothermotoga lettingae (strain ATCC BAA-301 / DSM 14385 / NBRC 107922 / TMO) (Thermotoga lettingae).